The following is a 409-amino-acid chain: NADH-quinone oxidoreductase subunit D (409 aa).

Belongs to the complex I 49 kDa subunit family. As to quaternary structure, NDH-1 is composed of 14 different subunits. Subunits NuoB, C, D, E, F, and G constitute the peripheral sector of the complex.

The protein localises to the cell inner membrane. The catalysed reaction is a quinone + NADH + 5 H(+)(in) = a quinol + NAD(+) + 4 H(+)(out). Functionally, NDH-1 shuttles electrons from NADH, via FMN and iron-sulfur (Fe-S) centers, to quinones in the respiratory chain. The immediate electron acceptor for the enzyme in this species is believed to be ubiquinone. Couples the redox reaction to proton translocation (for every two electrons transferred, four hydrogen ions are translocated across the cytoplasmic membrane), and thus conserves the redox energy in a proton gradient. The chain is NADH-quinone oxidoreductase subunit D from Helicobacter acinonychis (strain Sheeba).